The primary structure comprises 364 residues: 3'(2'),5'-bisphosphate nucleotidase 1 (364 aa).

Aspartate 54 (proton acceptor) is an active-site residue. Positions 77, 141, 143, and 144 each coordinate Mg(2+). Threonine 146 acts as the Proton acceptor in catalysis. Residues threonine 146, histidine 243, serine 272, lysine 275, arginine 289, and aspartate 302 each coordinate adenosine 3',5'-bisphosphate. AMP contacts are provided by histidine 243, serine 272, lysine 275, arginine 289, and aspartate 302. Residue aspartate 302 coordinates Mg(2+).

Belongs to the inositol monophosphatase superfamily. It depends on Mg(2+) as a cofactor.

The catalysed reaction is 3'-phosphoadenylyl sulfate + H2O = adenosine 5'-phosphosulfate + phosphate. It catalyses the reaction adenosine 3',5'-bisphosphate + H2O = AMP + phosphate. It carries out the reaction adenosine 2',5'-bisphosphate + H2O = AMP + phosphate. Functionally, phosphatase that converts adenosine 3'-phosphate 5'-phosphosulfate (PAPS) to adenosine 5'-phosphosulfate (APS) and 3'(2')-phosphoadenosine 5'-phosphate (PAP) to AMP. Regulates the flux of sulfur in the sulfur-activation pathway by converting PAPS to APS. Involved in salt tolerance. The chain is 3'(2'),5'-bisphosphate nucleotidase 1 (HAL21) from Candida albicans (strain WO-1) (Yeast).